Here is a 248-residue protein sequence, read N- to C-terminus: Pathogenesis-related thaumatin-like protein 3.4 (248 aa).

The first 25 residues, 1–25, serve as a signal peptide directing secretion; the sequence is MARAILWVLLTVMAVSLLLHAGVEG. Intrachain disulfides connect Cys34–Cys227, Cys75–Cys85, Cys90–Cys96, Cys141–Cys216, Cys146–Cys199, Cys154–Cys164, Cys168–Cys177, and Cys178–Cys186. A glycan (N-linked (GlcNAc...) asparagine) is linked at Asn235.

Belongs to the thaumatin family. In terms of tissue distribution, mainly expressed in male and female strobili, and, at lower levels, in roots of seedlings and saplings.

May be involved in disease resistance. This Cryptomeria japonica (Japanese cedar) protein is Pathogenesis-related thaumatin-like protein 3.4.